The sequence spans 618 residues: UvrABC system protein C (618 aa).

Positions 13–92 (DKPGVYLMKN…IKKYRPKYNI (80 aa)) constitute a GIY-YIG domain. Positions 204 to 239 (LDIVENFKLNMEKAAENLEFEKAAMLRDKINIIEKI) constitute a UVR domain.

The protein belongs to the UvrC family. As to quaternary structure, interacts with UvrB in an incision complex.

It is found in the cytoplasm. Its function is as follows. The UvrABC repair system catalyzes the recognition and processing of DNA lesions. UvrC both incises the 5' and 3' sides of the lesion. The N-terminal half is responsible for the 3' incision and the C-terminal half is responsible for the 5' incision. The sequence is that of UvrABC system protein C from Clostridium botulinum (strain Kyoto / Type A2).